Reading from the N-terminus, the 276-residue chain is NAD kinase (276 aa).

Asp67 functions as the Proton acceptor in the catalytic mechanism. NAD(+) contacts are provided by residues 67 to 68 (DG), Arg72, 136 to 137 (ND), Lys147, Arg164, Asp166, 177 to 182 (TAYALS), Ala201, and Gln235.

The protein belongs to the NAD kinase family. A divalent metal cation is required as a cofactor.

The protein localises to the cytoplasm. The catalysed reaction is NAD(+) + ATP = ADP + NADP(+) + H(+). In terms of biological role, involved in the regulation of the intracellular balance of NAD and NADP, and is a key enzyme in the biosynthesis of NADP. Catalyzes specifically the phosphorylation on 2'-hydroxyl of the adenosine moiety of NAD to yield NADP. This Thermococcus sibiricus (strain DSM 12597 / MM 739) protein is NAD kinase.